The chain runs to 336 residues: Glycerol-3-phosphate dehydrogenase [NAD(P)+] (336 aa).

NADPH is bound by residues Ser-16, Tyr-17, His-37, and Lys-111. 3 residues coordinate sn-glycerol 3-phosphate: Lys-111, Gly-140, and Thr-142. Ala-144 lines the NADPH pocket. Positions 196, 249, 259, 260, and 261 each coordinate sn-glycerol 3-phosphate. The active-site Proton acceptor is Lys-196. Arg-260 contributes to the NADPH binding site. The NADPH site is built by Val-284 and Glu-286.

This sequence belongs to the NAD-dependent glycerol-3-phosphate dehydrogenase family.

It localises to the cytoplasm. The catalysed reaction is sn-glycerol 3-phosphate + NAD(+) = dihydroxyacetone phosphate + NADH + H(+). The enzyme catalyses sn-glycerol 3-phosphate + NADP(+) = dihydroxyacetone phosphate + NADPH + H(+). It participates in membrane lipid metabolism; glycerophospholipid metabolism. Catalyzes the reduction of the glycolytic intermediate dihydroxyacetone phosphate (DHAP) to sn-glycerol 3-phosphate (G3P), the key precursor for phospholipid synthesis. The polypeptide is Glycerol-3-phosphate dehydrogenase [NAD(P)+] (Actinobacillus pleuropneumoniae serotype 3 (strain JL03)).